The primary structure comprises 693 residues: Polyribonucleotide nucleotidyltransferase (693 aa).

D485 and D491 together coordinate Mg(2+). One can recognise a KH domain in the interval 552 to 611 (PRIETMQINTSKIATVIGPGGKQIRQIIERSGAQVDINDNGLINISANTQESIDKAKELI). The region spanning 621 to 689 (GKIYNGRVTS…EKGQLKLSHK (69 aa)) is the S1 motif domain.

This sequence belongs to the polyribonucleotide nucleotidyltransferase family. Mg(2+) is required as a cofactor.

It is found in the cytoplasm. It carries out the reaction RNA(n+1) + phosphate = RNA(n) + a ribonucleoside 5'-diphosphate. Involved in mRNA degradation. Catalyzes the phosphorolysis of single-stranded polyribonucleotides processively in the 3'- to 5'-direction. The protein is Polyribonucleotide nucleotidyltransferase of Chlamydia muridarum (strain MoPn / Nigg).